The chain runs to 647 residues: Threonine--tRNA ligase (647 aa).

Residues 1-63 (MDKINITFPD…EEDGSIEIVT (63 aa)) form the TGS domain. The segment at 242-540 (DHRKIGKELD…LTEETKGAFP (299 aa)) is catalytic. Cys-336, His-387, and His-517 together coordinate Zn(2+).

This sequence belongs to the class-II aminoacyl-tRNA synthetase family. Homodimer. The cofactor is Zn(2+).

It localises to the cytoplasm. It catalyses the reaction tRNA(Thr) + L-threonine + ATP = L-threonyl-tRNA(Thr) + AMP + diphosphate + H(+). Its function is as follows. Catalyzes the attachment of threonine to tRNA(Thr) in a two-step reaction: L-threonine is first activated by ATP to form Thr-AMP and then transferred to the acceptor end of tRNA(Thr). Also edits incorrectly charged L-seryl-tRNA(Thr). The sequence is that of Threonine--tRNA ligase from Staphylococcus carnosus (strain TM300).